The chain runs to 448 residues: Trigger factor (448 aa).

The region spanning 172 to 257 is the PPIase FKBP-type domain; it reads GDRVTVDFVG…MKKIEWPHLP (86 aa).

This sequence belongs to the FKBP-type PPIase family. Tig subfamily.

The protein resides in the cytoplasm. The enzyme catalyses [protein]-peptidylproline (omega=180) = [protein]-peptidylproline (omega=0). Functionally, involved in protein export. Acts as a chaperone by maintaining the newly synthesized protein in an open conformation. Functions as a peptidyl-prolyl cis-trans isomerase. This is Trigger factor from Burkholderia cenocepacia (strain HI2424).